The following is a 272-amino-acid chain: Phosphate import ATP-binding protein PstB (272 aa).

The ABC transporter domain maps to 26 to 267 (LEIRNLDLSY…PRKRKTEDYI (242 aa)). Residue 58 to 65 (GPSGCGKS) participates in ATP binding.

This sequence belongs to the ABC transporter superfamily. Phosphate importer (TC 3.A.1.7) family. As to quaternary structure, the complex is composed of two ATP-binding proteins (PstB), two transmembrane proteins (PstC and PstA) and a solute-binding protein (PstS).

It localises to the cell inner membrane. The catalysed reaction is phosphate(out) + ATP + H2O = ADP + 2 phosphate(in) + H(+). Its function is as follows. Part of the ABC transporter complex PstSACB involved in phosphate import. Responsible for energy coupling to the transport system. This Shewanella denitrificans (strain OS217 / ATCC BAA-1090 / DSM 15013) protein is Phosphate import ATP-binding protein PstB.